The primary structure comprises 273 residues: Dermonecrotic toxin LarSicTox-alphaVII1 (273 aa).

His-5 is an active-site residue. Glu-25 and Asp-27 together coordinate Mg(2+). His-41 functions as the Nucleophile in the catalytic mechanism. 2 cysteine pairs are disulfide-bonded: Cys-45-Cys-51 and Cys-47-Cys-192. Asp-85 contributes to the Mg(2+) binding site.

Belongs to the arthropod phospholipase D family. Class II subfamily. Requires Mg(2+) as cofactor. In terms of tissue distribution, expressed by the venom gland.

It localises to the secreted. The enzyme catalyses an N-(acyl)-sphingosylphosphocholine = an N-(acyl)-sphingosyl-1,3-cyclic phosphate + choline. It carries out the reaction an N-(acyl)-sphingosylphosphoethanolamine = an N-(acyl)-sphingosyl-1,3-cyclic phosphate + ethanolamine. The catalysed reaction is a 1-acyl-sn-glycero-3-phosphocholine = a 1-acyl-sn-glycero-2,3-cyclic phosphate + choline. It catalyses the reaction a 1-acyl-sn-glycero-3-phosphoethanolamine = a 1-acyl-sn-glycero-2,3-cyclic phosphate + ethanolamine. In terms of biological role, dermonecrotic toxins cleave the phosphodiester linkage between the phosphate and headgroup of certain phospholipids (sphingolipid and lysolipid substrates), forming an alcohol (often choline) and a cyclic phosphate. This toxin acts on sphingomyelin (SM). It may also act on ceramide phosphoethanolamine (CPE), lysophosphatidylcholine (LPC) and lysophosphatidylethanolamine (LPE), but not on lysophosphatidylserine (LPS), and lysophosphatidylglycerol (LPG). It acts by transphosphatidylation, releasing exclusively cyclic phosphate products as second products. Induces dermonecrosis, hemolysis, increased vascular permeability, edema, inflammatory response, and platelet aggregation. This chain is Dermonecrotic toxin LarSicTox-alphaVII1, found in Loxosceles arizonica (Arizona brown spider).